The following is a 239-amino-acid chain: Ribosomal RNA small subunit methyltransferase G (239 aa).

S-adenosyl-L-methionine contacts are provided by residues G80, F85, 103-105 (EAS), 131-132 (AE), and R150.

The protein belongs to the methyltransferase superfamily. RNA methyltransferase RsmG family.

Its subcellular location is the cytoplasm. Functionally, specifically methylates the N7 position of a guanine in 16S rRNA. This chain is Ribosomal RNA small subunit methyltransferase G, found in Caldanaerobacter subterraneus subsp. tengcongensis (strain DSM 15242 / JCM 11007 / NBRC 100824 / MB4) (Thermoanaerobacter tengcongensis).